We begin with the raw amino-acid sequence, 62 residues long: U8-theraphotoxin-Cg1a 1 (62 aa).

The first 21 residues, 1-21 (MKTLVLFIIFGLAALFLLSSA), serve as a signal peptide directing secretion. A propeptide spanning residues 22–29 (NELEETER) is cleaved from the precursor. 3 disulfides stabilise this stretch: Cys-31–Cys-46, Cys-38–Cys-51, and Cys-45–Cys-58.

Belongs to the neurotoxin 10 (Hwtx-1) family. 30 (Jztx-14) subfamily. In terms of tissue distribution, expressed by the venom gland.

The protein resides in the secreted. Probable ion channel inhibitor. In Chilobrachys guangxiensis (Chinese earth tiger tarantula), this protein is U8-theraphotoxin-Cg1a 1.